The sequence spans 287 residues: Formamidopyrimidine-DNA glycosylase (287 aa).

Pro-2 (schiff-base intermediate with DNA) is an active-site residue. Glu-3 acts as the Proton donor in catalysis. The active-site Proton donor; for beta-elimination activity is the Lys-60. DNA-binding residues include His-100 and Arg-119. An FPG-type zinc finger spans residues Gln-249–Pro-283. Arg-273 acts as the Proton donor; for delta-elimination activity in catalysis.

It belongs to the FPG family. As to quaternary structure, monomer. Requires Zn(2+) as cofactor.

It catalyses the reaction Hydrolysis of DNA containing ring-opened 7-methylguanine residues, releasing 2,6-diamino-4-hydroxy-5-(N-methyl)formamidopyrimidine.. The catalysed reaction is 2'-deoxyribonucleotide-(2'-deoxyribose 5'-phosphate)-2'-deoxyribonucleotide-DNA = a 3'-end 2'-deoxyribonucleotide-(2,3-dehydro-2,3-deoxyribose 5'-phosphate)-DNA + a 5'-end 5'-phospho-2'-deoxyribonucleoside-DNA + H(+). Functionally, involved in base excision repair of DNA damaged by oxidation or by mutagenic agents. Acts as a DNA glycosylase that recognizes and removes damaged bases. Has a preference for oxidized purines, such as 7,8-dihydro-8-oxoguanine (8-oxoG). Has AP (apurinic/apyrimidinic) lyase activity and introduces nicks in the DNA strand. Cleaves the DNA backbone by beta-delta elimination to generate a single-strand break at the site of the removed base with both 3'- and 5'-phosphates. The polypeptide is Formamidopyrimidine-DNA glycosylase (mutM) (Synechocystis sp. (strain ATCC 27184 / PCC 6803 / Kazusa)).